The sequence spans 445 residues: Glycine--tRNA ligase (445 aa).

Positions 97 and 145 each coordinate substrate. ATP is bound by residues arginine 177 to glutamate 179, phenylalanine 187 to phenylalanine 192, glutamate 262 to valine 263, and glycine 308 to arginine 311. Residue phenylalanine 192–glutamate 196 participates in substrate binding. Glutamate 304–glycine 308 is a substrate binding site.

The protein belongs to the class-II aminoacyl-tRNA synthetase family. Homodimer.

The protein localises to the cytoplasm. It catalyses the reaction tRNA(Gly) + glycine + ATP = glycyl-tRNA(Gly) + AMP + diphosphate. In terms of biological role, catalyzes the attachment of glycine to tRNA(Gly). The chain is Glycine--tRNA ligase from Borreliella burgdorferi (strain ATCC 35210 / DSM 4680 / CIP 102532 / B31) (Borrelia burgdorferi).